A 239-amino-acid chain; its full sequence is RING finger protein 151 (239 aa).

The segment at 20–58 (CSVCHGVLKRPTRLPCSHIFCKKCIFRWLARQNTCPCCR) adopts an RING-type zinc-finger fold. The segment at 101 to 156 (EHQDSCPFELMACPNEGCTVQVLRGVLDEHRQHCQQNGQQRCPLGCGSTLAALEGE) adopts a TRAF-type zinc-finger fold.

As to quaternary structure, interacts with DTNBP1. Expressed in testis. Expressed in round spermatids of the stages VII-VIII semniniferous tubules. Expressed in elongating spermatids of stages VIII-IX seminiferous tubules (at protein level).

The protein resides in the cytoplasm. It is found in the nucleus. Its function is as follows. May be involved in acrosome formation of spermatids. This is RING finger protein 151 (Rnf151) from Mus musculus (Mouse).